The sequence spans 357 residues: Molybdenum import ATP-binding protein ModC (357 aa).

The ABC transporter domain occupies 1–233 (MRLEVEARLR…PFPTSGPGRR (233 aa)). 31 to 38 (GRSGSGKT) lines the ATP pocket. Residues 293-357 (GISALNVLPG…AVVKTVALDY (65 aa)) enclose the Mop domain.

Belongs to the ABC transporter superfamily. Molybdate importer (TC 3.A.1.8) family. The complex is composed of two ATP-binding proteins (ModC), two transmembrane proteins (ModB) and a solute-binding protein (ModA).

It localises to the cell inner membrane. It catalyses the reaction molybdate(out) + ATP + H2O = molybdate(in) + ADP + phosphate + H(+). Part of the ABC transporter complex ModABC involved in molybdenum import. Responsible for energy coupling to the transport system. The protein is Molybdenum import ATP-binding protein ModC of Rhizobium meliloti (strain 1021) (Ensifer meliloti).